The following is a 224-amino-acid chain: Beta-casein (224 aa).

The first 15 residues, 1–15 (MKVLILACLVALALA), serve as a signal peptide directing secretion. Serine 30, serine 32, serine 33, and serine 34 each carry phosphoserine. Residue serine 50 is modified to Phosphoserine; in variant A1, variant A2, variant A3, variant B, variant E, variant F, variant G and variant H.

Belongs to the beta-casein family. Mammary gland specific. Secreted in milk.

It localises to the secreted. Its function is as follows. Important role in determination of the surface properties of the casein micelles. Casoparan acts as a macrophage activator, increasing the phagocytic activity of macrophages and peroxide release from macrophages. It also acts as a bradykinin-potentiating peptide. In terms of biological role, casohypotensin acts as a bradykinin-potentiating peptide. Induces hypotension in rats. Acts as a strong competitive inhibitor of endo-oligopeptidase A. Functionally, antioxidant peptide has antioxidant activity. This chain is Beta-casein (CSN2), found in Bos taurus (Bovine).